The primary structure comprises 85 residues: U4-theraphotoxin-Hhn1w (85 aa).

The signal sequence occupies residues 1 to 22 (MKVTLIAILTCAAVLALHTTAA). The propeptide occupies 23–48 (EELEAESQLMEVGMPDTELAAVDEER). 3 cysteine pairs are disulfide-bonded: Cys52-Cys66, Cys56-Cys77, and Cys71-Cys82.

Belongs to the neurotoxin 12 (Hwtx-2) family. 02 (Hwtx-2) subfamily. Expressed by the venom gland.

It is found in the secreted. Postsynaptic neurotoxin. The protein is U4-theraphotoxin-Hhn1w of Cyriopagopus hainanus (Chinese bird spider).